The following is a 611-amino-acid chain: Mitochondrial distribution and morphology protein 34 (611 aa).

The region spanning 1–195 is the SMP-LTD domain; that stretch reads MAFNFNWSPL…LPAIIHRLSL (195 aa). Residues 325-342 are compositionally biased toward polar residues; it reads SAPLSSQDTASVASSQSR. Disordered stretches follow at residues 325-347, 361-402, 415-544, and 587-611; these read SAPLSSQDTASVASSQSRPGLPS, RHSK…STIT, SIIP…PTYT, and SYVGSGSGSGGFWDRSHTPPPAYRH. The span at 361 to 373 shows a compositional bias: basic residues; that stretch reads RHSKAHARKRKKR. Basic and acidic residues-rich tracts occupy residues 374–385 and 444–459; these read VIDLRPHRKPTD and TLRDRIVDRDDAERTN. Pro residues predominate over residues 520–529; the sequence is PLGPPAPAPI.

The protein belongs to the MDM34 family. In terms of assembly, component of the ER-mitochondria encounter structure (ERMES) or MDM complex, composed of MMM1, MDM10, MDM12 and MDM34.

Its subcellular location is the mitochondrion outer membrane. Its function is as follows. Component of the ERMES/MDM complex, which serves as a molecular tether to connect the endoplasmic reticulum (ER) and mitochondria. Components of this complex are involved in the control of mitochondrial shape and protein biogenesis, and function in nonvesicular lipid trafficking between the ER and mitochondria. MDM34 is required for the interaction of the ER-resident membrane protein MMM1 and the outer mitochondrial membrane-resident beta-barrel protein MDM10. The protein is Mitochondrial distribution and morphology protein 34 of Paracoccidioides brasiliensis (strain Pb18).